Reading from the N-terminus, the 125-residue chain is Large ribosomal subunit protein bL12 (125 aa).

The protein belongs to the bacterial ribosomal protein bL12 family. Homodimer. Part of the ribosomal stalk of the 50S ribosomal subunit. Forms a multimeric L10(L12)X complex, where L10 forms an elongated spine to which 2 to 4 L12 dimers bind in a sequential fashion. Binds GTP-bound translation factors.

Forms part of the ribosomal stalk which helps the ribosome interact with GTP-bound translation factors. Is thus essential for accurate translation. This Rhizobium johnstonii (strain DSM 114642 / LMG 32736 / 3841) (Rhizobium leguminosarum bv. viciae) protein is Large ribosomal subunit protein bL12.